The primary structure comprises 140 residues: Gonadotropin subunit beta-2 (140 aa).

The N-terminal stretch at 1-23 (MGTPVKILVVLFSVIVLLAVAQS) is a signal peptide. 6 cysteine pairs are disulfide-bonded: C29-C77, C43-C92, C46-C130, C54-C108, C58-C110, and C113-C120. N33 carries an N-linked (GlcNAc...) asparagine glycan.

It belongs to the glycoprotein hormones subunit beta family. As to quaternary structure, heterodimer of an alpha and a beta chain.

It is found in the secreted. Its function is as follows. Involved in gametogenesis and steroidogenesis. The protein is Gonadotropin subunit beta-2 (cgbb) of Carassius auratus (Goldfish).